The chain runs to 345 residues: Fe-S cluster assembly protein DRE2 (345 aa).

The segment at 11-166 (FSHSSNGVVL…SIGSSSGSSS (156 aa)) is N-terminal SAM-like domain. The tract at residues 147–166 (SKPATASSSFSIGSSSGSSS) is disordered. Residues 153–166 (SSSFSIGSSSGSSS) are compositionally biased toward low complexity. The tract at residues 167-210 (ALPLRRKLGSGASANAKKSLWATQPASANDLIDEASLLRDADFV) is linker. Positions 220, 233, 236, and 238 each coordinate [2Fe-2S] cluster. The tract at residues 220 to 238 (CDVGAGQGKKKKACKGCTC) is fe-S binding site A. Positions 307, 310, 318, and 321 each coordinate [4Fe-4S] cluster. 2 short sequence motifs (cx2C motif) span residues 307-310 (CGSC) and 318-321 (CSSC). The segment at 307–321 (CGSCFLGDAFRCSSC) is fe-S binding site B.

Belongs to the anamorsin family. In terms of assembly, monomer. Interacts with TAH18. Interacts with MIA40. Requires [2Fe-2S] cluster as cofactor. [4Fe-4S] cluster is required as a cofactor.

Its subcellular location is the cytoplasm. It localises to the mitochondrion intermembrane space. Component of the cytosolic iron-sulfur (Fe-S) protein assembly (CIA) machinery required for the maturation of extramitochondrial Fe-S proteins. Part of an electron transfer chain functioning in an early step of cytosolic Fe-S biogenesis, facilitating the de novo assembly of a [4Fe-4S] cluster on the scaffold complex CFD1-NBP35. Electrons are transferred to DRE2 from NADPH via the FAD- and FMN-containing protein TAH18. TAH18-DRE2 are also required for the assembly of the diferric tyrosyl radical cofactor of ribonucleotide reductase (RNR), probably by providing electrons for reduction during radical cofactor maturation in the catalytic small subunit RNR2. In Mycosarcoma maydis (Corn smut fungus), this protein is Fe-S cluster assembly protein DRE2.